Consider the following 857-residue polypeptide: Phosphoenolpyruvate carboxylase (857 aa).

Residues H144 and K530 contribute to the active site.

Belongs to the PEPCase type 1 family. As to quaternary structure, homotetramer. The cofactor is Mg(2+). The N-terminus is blocked.

It carries out the reaction oxaloacetate + phosphate = phosphoenolpyruvate + hydrogencarbonate. Forms oxaloacetate, a four-carbon dicarboxylic acid source for the tricarboxylic acid cycle. This is Phosphoenolpyruvate carboxylase (ppc) from Thermus sp. (strain 71).